The sequence spans 248 residues: Metallo-beta-lactamase type 2 (248 aa).

The first 21 residues, 1–21 (MKGLKGLLVLALGFTGLQVFG), serve as a signal peptide directing secretion. Residues H97, H99, D101, H160, and C179 each coordinate Zn(2+). K182 contributes to the substrate binding site. Residue H221 participates in Zn(2+) binding.

The protein belongs to the metallo-beta-lactamase superfamily. Class-B beta-lactamase family. In terms of assembly, monomer. Requires Zn(2+) as cofactor.

The protein resides in the periplasm. It catalyses the reaction a beta-lactam + H2O = a substituted beta-amino acid. In terms of biological role, confers resistance to the different beta-lactams antibiotics (penicillin, cephalosporin and carbapenem) via the hydrolysis of the beta-lactam ring. This is Metallo-beta-lactamase type 2 (blaB8) from Elizabethkingia meningoseptica (Chryseobacterium meningosepticum).